Consider the following 819-residue polypeptide: Meiotically up-regulated gene 45 protein (819 aa).

The chain crosses the membrane as a helical span at residues 797–817 (AMCLLTLLIGIYLILQVVFIY).

The protein localises to the membrane. In terms of biological role, has a role in meiosis. The sequence is that of Meiotically up-regulated gene 45 protein (mug45) from Schizosaccharomyces pombe (strain 972 / ATCC 24843) (Fission yeast).